The primary structure comprises 330 residues: MTKIMFFGTRDYEKEMALNWGKKNNVEVTTSKELLSSATVDQLKDYDGVTTMQFGKLENDVYPKLESYGIKQIAQRTAGFDMYDLDLAKKHNIVISNVPSYSPETIAEYSVSIALQLVRRFPDIERRVQTHDFTWQAEIMSKPVKNMTVAIIGTGRIGAATAKIYAGFGATITAYDAYPNKDLDFLTYKDSVKEAIKDADIISLHVPANKESYHLFDKAMFDHVKKGAILVNAARGAVINTPDLIAAVNDGTLLGAAIDTYENEAAYFTNDWTNKDIDDKTLLELIEHERILVTPHIAFFSDEAVQNLVEGGLNAALSVINTGTCETRLN.

NAD(+) is bound by residues 156 to 157 (RI), Asp-176, 206 to 207 (VP), 233 to 235 (AAR), and Asp-259. The active site involves Arg-235. Residue Glu-264 is part of the active site. Catalysis depends on His-296, which acts as the Proton donor.

Belongs to the D-isomer specific 2-hydroxyacid dehydrogenase family.

It catalyses the reaction (R)-lactate + NAD(+) = pyruvate + NADH + H(+). This is D-lactate dehydrogenase (ldhD) from Staphylococcus aureus (strain Mu50 / ATCC 700699).